The sequence spans 183 residues: Inner membrane-spanning protein YciB (183 aa).

The next 5 membrane-spanning stretches (helical) occupy residues 10–30 (LVIF…GALI), 50–70 (MHLI…VFHD), 72–92 (AFIK…LAVS), 118–138 (VTWY…YVAF), and 148–168 (FKVF…VIYL).

Belongs to the YciB family.

Its subcellular location is the cell inner membrane. Plays a role in cell envelope biogenesis, maintenance of cell envelope integrity and membrane homeostasis. The protein is Inner membrane-spanning protein YciB of Shewanella sediminis (strain HAW-EB3).